Consider the following 126-residue polypeptide: UPF0047 protein AF_2050 (126 aa).

The protein belongs to the UPF0047 family.

The protein is UPF0047 protein AF_2050 of Archaeoglobus fulgidus (strain ATCC 49558 / DSM 4304 / JCM 9628 / NBRC 100126 / VC-16).